Consider the following 313-residue polypeptide: tRNA dimethylallyltransferase (313 aa).

17-24 (GPTASGKT) provides a ligand contact to ATP. 19-24 (TASGKT) is a binding site for substrate. 3 interaction with substrate tRNA regions span residues 42–45 (DSAL), 166–170 (QRLSR), and 247–252 (RCVGYR).

The protein belongs to the IPP transferase family. As to quaternary structure, monomer. Mg(2+) is required as a cofactor.

The catalysed reaction is adenosine(37) in tRNA + dimethylallyl diphosphate = N(6)-dimethylallyladenosine(37) in tRNA + diphosphate. Functionally, catalyzes the transfer of a dimethylallyl group onto the adenine at position 37 in tRNAs that read codons beginning with uridine, leading to the formation of N6-(dimethylallyl)adenosine (i(6)A). The chain is tRNA dimethylallyltransferase from Serratia proteamaculans (strain 568).